The following is a 1097-amino-acid chain: Protein STICHEL-like 3 (1097 aa).

Disordered regions lie at residues 1 to 22, 74 to 168, 220 to 293, 321 to 358, and 400 to 436; these read MTTT…NNRI, SLRD…YRIG, NVRP…GFGE, GRSL…DSSS, and DSDL…LTEK. Positions 10–20 are enriched in polar residues; the sequence is RVASSSSTRNN. A compositionally biased stretch (basic and acidic residues) spans 95–113; it reads LPKKGDLVEGGRRSVDLKK. The segment covering 126–136 has biased composition (polar residues); sequence PVVNFGTSKVT. Residues 137–168 are compositionally biased toward basic and acidic residues; it reads PSDERSGPVSGERDSGRRVKREESSRKSYRIG. Gly residues predominate over residues 227–241; that stretch reads YGGGGGGGNTRGCAG. Residues 245 to 259 show a composition bias toward basic residues; that stretch reads RPKRRKFRGTRRVRG. Composition is skewed to basic and acidic residues over residues 281–291 and 332–345; these read VEKHDGEKEGF and KGGR…RNGS. Residues 346-358 show a composition bias toward low complexity; sequence DKMMIQSDDDSSS. The segment covering 411 to 429 has biased composition (basic residues); that stretch reads EKKHKKKSHVNARHRHRQQ. 472 to 479 is an ATP binding site; it reads GPNGTGKT. Positions 491, 500, 503, and 506 each coordinate Zn(2+). The stretch at 742 to 770 forms a coiled coil; it reads KEDMEKLRQALKTLSEAEKQLRVSNDKLT. 3 disordered regions span residues 790-828, 913-932, and 956-1003; these read SSTA…DSRK, DPRN…DKSL, and VTES…SQSI. Composition is skewed to basic and acidic residues over residues 796 to 807 and 818 to 828; these read GGRESSDHHLDP and GLDRRRGDSRK. Residues 993–1003 are compositionally biased toward polar residues; it reads ASQSQNQSQSI.

This sequence belongs to the DnaX/STICHEL family.

The chain is Protein STICHEL-like 3 from Arabidopsis thaliana (Mouse-ear cress).